Consider the following 403-residue polypeptide: Metacaspase-1A (403 aa).

The disordered stretch occupies residues 1–93; sequence MQHHHHSSYG…PPTDPVAFGH (93 aa). The span at 18–31 shows a compositional bias: low complexity; it reads GQAYRQQQPYYGQP. Positions 32–55 are enriched in pro residues; that stretch reads SPQPYAQPPPPNYQRPSGYGPPPS. Residues H194 and C250 contribute to the active site.

This sequence belongs to the peptidase C14B family.

In terms of biological role, involved in cell death (apoptosis). This Aspergillus terreus (strain NIH 2624 / FGSC A1156) protein is Metacaspase-1A (casA).